We begin with the raw amino-acid sequence, 358 residues long: Leukotriene B4 receptor 2 (358 aa).

Residues 1 to 24 (MSVCYRPPGNETLLSWKGSRATGT) are Extracellular-facing. N-linked (GlcNAc...) asparagine glycosylation occurs at N10. A helical transmembrane segment spans residues 25–45 (AFLLLAALLGLPGNGFVVWSL). Residues 46-60 (AGWRPTAGRPLAATL) are Cytoplasmic-facing. Residues 61–81 (VLHLALADGAVLLLTPLFVAF) form a helical membrane-spanning segment. The Extracellular portion of the chain corresponds to 82 to 96 (LSRQAWPLGQVGCKA). The helical transmembrane segment at 97 to 117 (VYYVCALSMYASVLLTGLLSL) threads the bilayer. The Cytoplasmic segment spans residues 118-140 (QRCLAVTRPFLAPRLRSPALARR). A helical membrane pass occupies residues 141 to 161 (LLLGVWLAALVLAVPAAVYRH). Residues 162 to 185 (LWGDRVCQLCHPSAVHAAAHLSLE) are Extracellular-facing. Residues 186–206 (TLTAFVLPFGTVLGCYGVTLA) form a helical membrane-spanning segment. The Cytoplasmic segment spans residues 207 to 225 (RLRGARWGSGRQGTRVGRL). Residues 226 to 246 (VSAIVLAFGLLWAPYHAVNLL) traverse the membrane as a helical segment. Over 247–275 (QAVAALAPPEGPLARLGGAGQAARAGTTA) the chain is Extracellular. The chain crosses the membrane as a helical span at residues 276 to 296 (LAFFSSSVNPVLYVFTAGDLL). Residues 297 to 358 (PRAGPRFLTR…GRMEKDSQEW (62 aa)) lie on the Cytoplasmic side of the membrane. The segment at 315–358 (RVGSRSREGTMELRTTPRLKVVGQGRGYGDPGGGGRMEKDSQEW) is disordered. Residues 338–349 (QGRGYGDPGGGG) show a composition bias toward gly residues.

This sequence belongs to the G-protein coupled receptor 1 family.

It is found in the cell membrane. Its function is as follows. Low-affinity receptor for leukotrienes including leukotriene B4. Mediates chemotaxis of granulocytes and macrophages. The response is mediated via G-proteins that activate a phosphatidylinositol-calcium second messenger system. The chain is Leukotriene B4 receptor 2 (Ltb4r2) from Rattus norvegicus (Rat).